The chain runs to 330 residues: Elongation factor Ts (330 aa).

Positions 79–82 (TDFV) are involved in Mg(2+) ion dislocation from EF-Tu.

Belongs to the EF-Ts family.

It is found in the cytoplasm. In terms of biological role, associates with the EF-Tu.GDP complex and induces the exchange of GDP to GTP. It remains bound to the aminoacyl-tRNA.EF-Tu.GTP complex up to the GTP hydrolysis stage on the ribosome. This Bacteroides thetaiotaomicron (strain ATCC 29148 / DSM 2079 / JCM 5827 / CCUG 10774 / NCTC 10582 / VPI-5482 / E50) protein is Elongation factor Ts.